The sequence spans 275 residues: UDP-Gal:alpha-D-GlcNAc-diphosphoundecaprenol beta-1,3-galactosyltransferase (275 aa).

The protein belongs to the glycosyltransferase 2 family. The cofactor is Mn(2+).

The protein localises to the cell inner membrane. It carries out the reaction N-acetyl-alpha-D-glucosaminyl-di-trans,octa-cis-undecaprenyl diphosphate + UDP-alpha-D-galactose = beta-D-Gal-(1-&gt;3)-alpha-D-GlcNAc-di-trans,octa-cis-undecaprenyl diphosphate + UDP + H(+). The protein operates within bacterial outer membrane biogenesis; LPS O-antigen biosynthesis. In terms of biological role, catalyzes the addition of Gal, the second sugar moiety of the O7-antigen repeating unit, to GlcNAc-pyrophosphate-undecaprenol. This Escherichia coli protein is UDP-Gal:alpha-D-GlcNAc-diphosphoundecaprenol beta-1,3-galactosyltransferase (wbbD).